The sequence spans 858 residues: Volume-regulated anion channel subunit LRRC8D (858 aa).

At 1–22 the chain is on the cytoplasmic side; it reads MFTLAEVASLNDIQPTYRILKP. A helical transmembrane segment spans residues 23-48; the sequence is WWDVFMDYLAVVMLMVAIFAGTMQLT. At 49–163 the chain is on the extracellular side; the sequence is KDQVVCLPVL…YHLALPWYSK (115 aa). A disulfide bridge connects residues Cys54 and Cys354. Residues 164 to 182 traverse the membrane as a helical segment; the sequence is YFPYLALIHTIILMVSSNF. Over 183-308 the chain is Cytoplasmic; it reads WFKYPKTCSK…EDSDLIYKLY (126 aa). A disordered region spans residues 221–251; that stretch reads SEENKQRITGAQTLPKHVSTSSDEGSPSAST. A compositionally biased stretch (polar residues) spans 227–251; it reads RITGAQTLPKHVSTSSDEGSPSAST. Residues Ser241, Ser242, and Ser246 each carry the phosphoserine modification. A helical membrane pass occupies residues 309–328; that stretch reads VVQTVIKTAKFIFILCYTAN. Residues 329–360 lie on the Extracellular side of the membrane; that stretch reads FVNAISFEHVCKPKVEHLIGYEVFECTHNMAY. The helical transmembrane segment at 361 to 386 threads the bilayer; sequence MLKKLLISYISIICVYGFICLYTLFW. Residues 387–858 lie on the Cytoplasmic side of the membrane; that stretch reads LFRIPLKEYS…DINIPFANGI (472 aa). 13 LRR repeats span residues 514-534, 538-559, 561-582, 589-609, 612-632, 636-657, 659-680, 684-705, 707-728, 730-751, 753-774, 776-797, and 799-820; these read NLQELHLCHCPAKVEQTAFSF, HLRCLHVKFTDVAEIPAWVYLL, NLRELYLIGNLNSENNKMIGLE, HLKILHVKSNLTKVPSNITDV, HLTKLVIHNDGTKLLVLNSLK, NVAELELQNCELERIPHAIFSL, NLQELDLKSNNIRTIEEIISFQ, RLTCLKLWHNKIVTIPPSITHV, NLESLYFSNNKLESLPVAVFSL, KLRCLDVSYNNISMIPIEIGLL, NLQHLHITGNKVDILPKQLFKC, KLRTLNLGQNCITSLPEKVGQL, and QLTQLELKGNCLDRLPAQLGQC.

It belongs to the LRRC8 family. As to quaternary structure, heterohexamer; oligomerizes with other LRRC8 proteins (LRRC8A, LRRC8B, LRRC8C and/or LRRC8E) to form a heterohexamer. In vivo, the subunit composition may depend primarily on expression levels, and heterooligomeric channels containing various proportions of the different LRRC8 proteins may coexist.

It is found in the cell membrane. The protein resides in the endoplasmic reticulum membrane. It carries out the reaction chloride(in) = chloride(out). The enzyme catalyses iodide(out) = iodide(in). The catalysed reaction is taurine(out) = taurine(in). In terms of biological role, non-essential component of the volume-regulated anion channel (VRAC, also named VSOAC channel), an anion channel required to maintain a constant cell volume in response to extracellular or intracellular osmotic changes. The VRAC channel conducts iodide better than chloride and can also conduct organic osmolytes like taurine. Plays a redundant role in the efflux of amino acids, such as aspartate, in response to osmotic stress. LRRC8A and LRRC8D are required for the uptake of the drug cisplatin. Channel activity requires LRRC8A plus at least one other family member (LRRC8B, LRRC8C, LRRC8D or LRRC8E); channel characteristics depend on the precise subunit composition. Also acts as a regulator of glucose-sensing in pancreatic beta cells: VRAC currents, generated in response to hypotonicity- or glucose-induced beta cell swelling, depolarize cells, thereby causing electrical excitation, leading to increase glucose sensitivity and insulin secretion. VRAC channels containing LRRC8D inhibit transport of immunoreactive cyclic dinucleotide GMP-AMP (2'-3'-cGAMP), an immune messenger produced in response to DNA virus in the cytosol. Mediates the import of the antibiotic blasticidin-S into the cell. This chain is Volume-regulated anion channel subunit LRRC8D, found in Homo sapiens (Human).